The primary structure comprises 314 residues: Basic endochitinase (314 aa).

Positions 1 to 20 (MGLWALVAFCLLSLILVGSA) are cleaved as a signal peptide. Residues 21–61 (EQCGGQAGGRVCPGGACCSKFGWCGNTADYCGSGCQSQCSS) form the Chitin-binding type-1 domain. 7 cysteine pairs are disulfide-bonded: cysteine 23/cysteine 38, cysteine 32/cysteine 44, cysteine 37/cysteine 51, cysteine 55/cysteine 59, cysteine 86/cysteine 148, cysteine 160/cysteine 168, and cysteine 267/cysteine 299. The active-site Proton donor is glutamate 130.

Belongs to the glycosyl hydrolase 19 family. Chitinase class I subfamily.

It carries out the reaction Random endo-hydrolysis of N-acetyl-beta-D-glucosaminide (1-&gt;4)-beta-linkages in chitin and chitodextrins.. Functionally, defense against chitin-containing fungal pathogens. This chain is Basic endochitinase (CHIT1B), found in Vitis vinifera (Grape).